The sequence spans 341 residues: Ferredoxin--NADP reductase (341 aa).

Residues glutamate 36, glutamine 44, phenylalanine 49, valine 89, phenylalanine 123, aspartate 289, and threonine 329 each coordinate FAD.

This sequence belongs to the ferredoxin--NADP reductase type 2 family. Homodimer. The cofactor is FAD.

The catalysed reaction is 2 reduced [2Fe-2S]-[ferredoxin] + NADP(+) + H(+) = 2 oxidized [2Fe-2S]-[ferredoxin] + NADPH. The protein is Ferredoxin--NADP reductase of Ligilactobacillus salivarius (strain UCC118) (Lactobacillus salivarius).